Reading from the N-terminus, the 270-residue chain is uncharacterized protein (270 aa).

This is an uncharacterized protein from Bacillus subtilis (strain 168).